Consider the following 470-residue polypeptide: MSNSITLTLKNYLGRMPTINEYHMLKSQVRNIQKIMFFNKDIFISLIKKNKKKFFSEIKSSPSEIKTHILEYFLKQQKTSSIGKLYTIIELQTILVSSYTDVLGVLTTKSPYVFPSNIKYEPHSMKKIAHDILTSINVATISEKVMGRHNVSNLVTNVNLLMEEYLRRHNKSCICYGSYSLYLLNPSIKYGDIDILQTNSRIFLINLAFLIKFITGHNVMLLKVPYLKNYMVLRDNEDKHIIDSFNVRQETMHAIPKILIDNIYIVDPTFQLLSMIKMFSQIDRLEDLAKNQEKATIKLATLLEYVRIKHGIILNGNVTNMPMPASFNYEKRIVTVDASKYNFSFKKCFVYLDENSLSSDILDLNADDAIDFENVSNSVFLINDEVMYTYFSNTILMSSKNEIHEISARGVSAHILMYQILTDGDFLIPLSDIINSLMFKEKTPIFNIIPRDKKTGKHGIINIEKDIITH.

Active-site residues include Asp192 and Asp194.

Belongs to the poxviridae poly(A) polymerase catalytic subunit family. Heterodimer of a large (catalytic) subunit and a small (regulatory) subunit.

It catalyses the reaction RNA(n) + ATP = RNA(n)-3'-adenine ribonucleotide + diphosphate. Polymerase that creates the 3'-poly(A) tail of mRNA's. The protein is Poly(A) polymerase catalytic subunit (PAPL) of Homo sapiens (Human).